A 247-amino-acid chain; its full sequence is GTP cyclohydrolase 1 type 2 homolog (247 aa).

Positions 63, 64, 101, 215, and 219 each coordinate a divalent metal cation.

The protein belongs to the GTP cyclohydrolase I type 2/NIF3 family. In terms of assembly, toroid-shaped homohexamer. In the hexamer, 3 dimers assemble to form a ring-like structure surrounding a central hole.

Its function is as follows. Provides significant protection from radiation damage and may be involved in the degradation of radiation-damaged nucleotides. The chain is GTP cyclohydrolase 1 type 2 homolog (ybgI) from Salmonella typhi.